Here is a 325-residue protein sequence, read N- to C-terminus: Apoptosis-enhancing nuclease (325 aa).

Residues 27 to 35 carry the Nucleolar localization signal motif; it reads RKRHKRRSR. Residues 53–105 are disordered; it reads LSMPPEPGSSPLPTPFGAVTATEDASSGKQCPRAGSGGAPCSRRPAPGKASGP. Pro residues predominate over residues 56–66; sequence PPEPGSSPLPT. Residues 110–266 enclose the Exonuclease domain; it reads CVAIDCEMVG…EDATTAMELY (157 aa). A Nuclear localization signal motif is present at residues 165–188; it reads RQHMCKAIPFQVAQKEILKLLKGK. A disordered region spans residues 281 to 325; sequence LWTCPEDREPDSSTDMEQYMEDQYWPDDLAHGSRGGAREAQDRRN. Basic and acidic residues predominate over residues 308–325; sequence DLAHGSRGGAREAQDRRN.

It is found in the nucleus. The protein resides in the nucleolus. In terms of biological role, exonuclease with activity against single- and double-stranded DNA and RNA. Mediates p53-induced apoptosis. When induced by p53 following DNA damage, digests double-stranded DNA to form single-stranded DNA and amplifies DNA damage signals, leading to enhancement of apoptosis. In Pongo abelii (Sumatran orangutan), this protein is Apoptosis-enhancing nuclease (AEN).